The sequence spans 238 residues: 7-cyano-7-deazaguanine synthase (238 aa).

Position 10 to 20 (10 to 20 (LSGGLDSSTVL)) interacts with ATP. The Zn(2+) site is built by Cys190, Cys198, Cys201, and Cys204.

The protein belongs to the QueC family. The cofactor is Zn(2+).

It catalyses the reaction 7-carboxy-7-deazaguanine + NH4(+) + ATP = 7-cyano-7-deazaguanine + ADP + phosphate + H2O + H(+). Its pathway is purine metabolism; 7-cyano-7-deazaguanine biosynthesis. Functionally, catalyzes the ATP-dependent conversion of 7-carboxy-7-deazaguanine (CDG) to 7-cyano-7-deazaguanine (preQ(0)). This Thermoplasma acidophilum (strain ATCC 25905 / DSM 1728 / JCM 9062 / NBRC 15155 / AMRC-C165) protein is 7-cyano-7-deazaguanine synthase.